The chain runs to 118 residues: Large ribosomal subunit protein uL18 (118 aa).

A disordered region spans residues 1–26 (MISKPDKNKIRQKRHRRVRGKLSGTA). Over residues 10–20 (IRQKRHRRVRG) the composition is skewed to basic residues.

Belongs to the universal ribosomal protein uL18 family. Part of the 50S ribosomal subunit; part of the 5S rRNA/L5/L18/L25 subcomplex. Contacts the 5S and 23S rRNAs.

In terms of biological role, this is one of the proteins that bind and probably mediate the attachment of the 5S RNA into the large ribosomal subunit, where it forms part of the central protuberance. This Streptococcus equi subsp. zooepidemicus (strain H70) protein is Large ribosomal subunit protein uL18.